Consider the following 85-residue polypeptide: Homeobox protein knotted-1-like 8 (85 aa).

Positions glutamate 1–phenylalanine 21 constitute an ELK domain. Positions serine 22 to alanine 85 form a DNA-binding region, homeobox; TALE-type.

Belongs to the TALE/KNOX homeobox family. As to expression, strongly expressed in ear inflorescence primordia and shoot meristem. Weakly expressed in embryos. Absent from leaves.

It localises to the nucleus. Its function is as follows. Probably binds to the DNA sequence 5'-TGAC-3'. The polypeptide is Homeobox protein knotted-1-like 8 (KNOX8) (Zea mays (Maize)).